Consider the following 214-residue polypeptide: Endosomal/vacuolar adapter protein YPT35 (214 aa).

The interval 1–63 (MNDKISFLPP…ATITRTRPRR (63 aa)) is disordered. Positions 5–15 (ISFLPPEPIQL) match the PxP motif. Residues 16 to 31 (LDEDSTEPELDIDSQQ) are compositionally biased toward acidic residues. The segment covering 38-58 (SASNSNDSTSHSNDCGATITR) has biased composition (low complexity). Phosphoserine is present on residues Ser-65 and Ser-66. Residues 73 to 213 (FQKAHVSDCT…IQFLEPSKRV (141 aa)) enclose the PX domain.

This sequence belongs to the YPT35 family. Interacts with RBD2, YIF1, YIP1 and YIP4.

It localises to the endosome membrane. It is found in the vacuole membrane. Recruits the lipid transfer protein VPS13 to endosomal and vacuolar membranes. The protein is Endosomal/vacuolar adapter protein YPT35 (YPT35) of Saccharomyces cerevisiae (strain YJM789) (Baker's yeast).